We begin with the raw amino-acid sequence, 453 residues long: Chromosomal replication initiator protein DnaA (453 aa).

A domain I, interacts with DnaA modulators region spans residues Met1–Tyr71. Residues Tyr71 to Glu114 are domain II. Positions Gln115 to Ser331 are domain III, AAA+ region. Gly159, Gly161, Lys162, and Thr163 together coordinate ATP. The tract at residues Gln332–Val453 is domain IV, binds dsDNA.

Belongs to the DnaA family. As to quaternary structure, oligomerizes as a right-handed, spiral filament on DNA at oriC.

The protein localises to the cytoplasm. In terms of biological role, plays an essential role in the initiation and regulation of chromosomal replication. ATP-DnaA binds to the origin of replication (oriC) to initiate formation of the DNA replication initiation complex once per cell cycle. Binds the DnaA box (a 9 base pair repeat at the origin) and separates the double-stranded (ds)DNA. Forms a right-handed helical filament on oriC DNA; dsDNA binds to the exterior of the filament while single-stranded (ss)DNA is stabiized in the filament's interior. The ATP-DnaA-oriC complex binds and stabilizes one strand of the AT-rich DNA unwinding element (DUE), permitting loading of DNA polymerase. After initiation quickly degrades to an ADP-DnaA complex that is not apt for DNA replication. Binds acidic phospholipids. This chain is Chromosomal replication initiator protein DnaA, found in Staphylococcus aureus (strain Mu3 / ATCC 700698).